Here is a 181-residue protein sequence, read N- to C-terminus: Adenine phosphoribosyltransferase (181 aa).

Belongs to the purine/pyrimidine phosphoribosyltransferase family. As to quaternary structure, homodimer.

The protein resides in the cytoplasm. It carries out the reaction AMP + diphosphate = 5-phospho-alpha-D-ribose 1-diphosphate + adenine. It functions in the pathway purine metabolism; AMP biosynthesis via salvage pathway; AMP from adenine: step 1/1. Its function is as follows. Catalyzes a salvage reaction resulting in the formation of AMP, that is energically less costly than de novo synthesis. This Aliivibrio fischeri (strain ATCC 700601 / ES114) (Vibrio fischeri) protein is Adenine phosphoribosyltransferase.